The following is a 607-amino-acid chain: Large ribosomal subunit assembly factor BipA (607 aa).

The 196-residue stretch at glutamate 3–aspartate 198 folds into the tr-type G domain. GTP-binding positions include aspartate 15–threonine 20 and asparagine 128–aspartate 131.

This sequence belongs to the TRAFAC class translation factor GTPase superfamily. Classic translation factor GTPase family. BipA subfamily. As to quaternary structure, monomer.

It is found in the cytoplasm. The catalysed reaction is GTP + H2O = GDP + phosphate + H(+). Functionally, a 50S ribosomal subunit assembly protein with GTPase activity, required for 50S subunit assembly at low temperatures, may also play a role in translation. Binds GTP and analogs. Binds the 70S ribosome between the 30S and 50S subunits, in a similar position as ribosome-bound EF-G; it contacts a number of ribosomal proteins, both rRNAs and the A-site tRNA. The polypeptide is Large ribosomal subunit assembly factor BipA (Shigella flexneri).